Reading from the N-terminus, the 185-residue chain is MAEAKYEPRLKKEYVERIRKALQEQFSYANEMMIPKLDKIVINMGVGEATADSKKPTVAAADLAAIAGQKPVITRARNSIAGFKVREQMPIGAKVTLRGARMYEFMDRLVNIALPRVRDFRGLNPKSFDGRGNFAMGIKEHIVFPEINYDKVDQMWGMDIIVCTTATTDDEARALLKEFSFPFRQ.

Belongs to the universal ribosomal protein uL5 family. As to quaternary structure, part of the 50S ribosomal subunit; part of the 5S rRNA/L5/L18/L25 subcomplex. Contacts the 5S rRNA and the P site tRNA. Forms a bridge to the 30S subunit in the 70S ribosome.

In terms of biological role, this is one of the proteins that bind and probably mediate the attachment of the 5S RNA into the large ribosomal subunit, where it forms part of the central protuberance. In the 70S ribosome it contacts protein S13 of the 30S subunit (bridge B1b), connecting the 2 subunits; this bridge is implicated in subunit movement. Contacts the P site tRNA; the 5S rRNA and some of its associated proteins might help stabilize positioning of ribosome-bound tRNAs. The protein is Large ribosomal subunit protein uL5 of Rhizobium johnstonii (strain DSM 114642 / LMG 32736 / 3841) (Rhizobium leguminosarum bv. viciae).